We begin with the raw amino-acid sequence, 685 residues long: Probable serine/threonine-protein kinase CPE1738 (685 aa).

Positions 10-275 (YELLQCVGEG…LEKIKKDPNV (266 aa)) constitute a Protein kinase domain. Residues 16 to 24 (VGEGGMSFV) and Lys-39 contribute to the ATP site. Glu-143 serves as the catalytic Proton acceptor. The interval 277–339 (ISSKSAEDED…NIQTKPQKAI (63 aa)) is disordered. Over residues 306 to 329 (EPDEDDEDDDEYYEDDEDEDEEEN) the composition is skewed to acidic residues. PASTA domains are found at residues 376 to 440 (GKDV…TVSG), 441 to 508 (GEGQ…TISK), 513 to 581 (KSET…TINY), and 589 to 648 (EKPK…TMEE). The tract at residues 480–500 (VPRGEVISQSPNANESVDKGS) is disordered. The interval 623-685 (DTAKVKSVSN…PKQPEQSGNN (63 aa)) is disordered. 2 stretches are compositionally biased toward low complexity: residues 627–645 (VKSV…VSVT) and 654–685 (QPTQ…SGNN).

It belongs to the protein kinase superfamily. Ser/Thr protein kinase family.

It catalyses the reaction L-seryl-[protein] + ATP = O-phospho-L-seryl-[protein] + ADP + H(+). It carries out the reaction L-threonyl-[protein] + ATP = O-phospho-L-threonyl-[protein] + ADP + H(+). This is Probable serine/threonine-protein kinase CPE1738 from Clostridium perfringens (strain 13 / Type A).